The following is a 248-amino-acid chain: DNA repair protein RecO (248 aa).

It belongs to the RecO family.

Functionally, involved in DNA repair and RecF pathway recombination. The sequence is that of DNA repair protein RecO from Streptomyces griseus subsp. griseus (strain JCM 4626 / CBS 651.72 / NBRC 13350 / KCC S-0626 / ISP 5235).